The following is an 810-amino-acid chain: LPS-assembly protein LptD (810 aa).

A signal peptide spans 1 to 29 (MTKWTLGYSYPIALTISLIPALTPAIVQA).

This sequence belongs to the LptD family. Component of the lipopolysaccharide transport and assembly complex. Interacts with LptE and LptA.

The protein resides in the cell outer membrane. Its function is as follows. Together with LptE, is involved in the assembly of lipopolysaccharide (LPS) at the surface of the outer membrane. This is LPS-assembly protein LptD from Aeromonas salmonicida (strain A449).